The following is a 233-amino-acid chain: Transmembrane protein 40 (233 aa).

Met-1 bears the N-acetylmethionine mark. Residues 1 to 14 (METSASSSQPQDNS) show a composition bias toward polar residues. Residues 1–143 (METSASSSQP…RRGSDPASGE (143 aa)) form a disordered region. A compositionally biased stretch (low complexity) spans 50–70 (SSSSSSSSSSSSSSSSSSSSS). The segment covering 93–104 (YPHGNGSPGPGH) has biased composition (gly residues). Residues 105–114 (GEPDVLKDEL) are compositionally biased toward basic and acidic residues. Residue Ser-137 is modified to Phosphoserine. Transmembrane regions (helical) follow at residues 160–180 (FFHF…YHYY) and 187–207 (LGVG…FGLV).

It localises to the membrane. The protein is Transmembrane protein 40 (TMEM40) of Homo sapiens (Human).